The sequence spans 89 residues: Small ribosomal subunit protein bS20 (89 aa).

It belongs to the bacterial ribosomal protein bS20 family.

In terms of biological role, binds directly to 16S ribosomal RNA. The polypeptide is Small ribosomal subunit protein bS20 (Solidesulfovibrio magneticus (strain ATCC 700980 / DSM 13731 / RS-1) (Desulfovibrio magneticus)).